The chain runs to 774 residues: Fe(3+) dicitrate transport protein FecA (774 aa).

An N-terminal signal peptide occupies residues 1 to 33; the sequence is MTPLRVFRKTTPLVNTIRLSLLPLAGLSFSAFA. A TonB box motif is present at residues 56 to 63; sequence FTLSVDAS. The TBDR plug domain occupies 129 to 250; sequence DVFEHAGARD…VGGVVNFVTR (122 aa). Residues 255-774 enclose the TBDR beta-barrel domain; it reads DFGIEAGVEG…TLYMQGSLKF (520 aa). Residues 757–774 carry the TonB C-terminal box motif; the sequence is GIYAGQPRTLYMQGSLKF.

It belongs to the TonB-dependent receptor family. As to quaternary structure, interacts (via periplasmic N-terminus) with FecR (via periplasmic C-terminus).

It localises to the cell outer membrane. Its function is as follows. FecA is the outer membrane receptor protein in the Fe(3+) dicitrate transport system. This is Fe(3+) dicitrate transport protein FecA (fecA) from Escherichia coli (strain K12).